A 127-amino-acid polypeptide reads, in one-letter code: Copper resistance protein C (127 aa).

Positions 1 to 25 (MFAFRSIATTVVMVAASLASASAFA) are cleaved as a signal peptide. The Cu cation site is built by histidine 26, methionine 65, methionine 68, methionine 71, methionine 76, and histidine 116.

Belongs to the CopC family.

The protein resides in the periplasm. In terms of biological role, copper-binding protein involved in copper resistance. The polypeptide is Copper resistance protein C (Xanthomonas campestris pv. juglandis (Xanthomonas arboricola pv. juglandis)).